The primary structure comprises 953 residues: Isoleucine--tRNA ligase (953 aa).

The short motif at 58 to 68 is the 'HIGH' region element; it reads PYANGNIHLGH. L-isoleucyl-5'-AMP is bound at residue E565. Residues 606-610 carry the 'KMSKS' region motif; that stretch reads KMSKS. K609 is a binding site for ATP. Positions 916, 919, 936, and 939 each coordinate Zn(2+).

The protein belongs to the class-I aminoacyl-tRNA synthetase family. IleS type 1 subfamily. In terms of assembly, monomer. The cofactor is Zn(2+).

Its subcellular location is the cytoplasm. The catalysed reaction is tRNA(Ile) + L-isoleucine + ATP = L-isoleucyl-tRNA(Ile) + AMP + diphosphate. In terms of biological role, catalyzes the attachment of isoleucine to tRNA(Ile). As IleRS can inadvertently accommodate and process structurally similar amino acids such as valine, to avoid such errors it has two additional distinct tRNA(Ile)-dependent editing activities. One activity is designated as 'pretransfer' editing and involves the hydrolysis of activated Val-AMP. The other activity is designated 'posttransfer' editing and involves deacylation of mischarged Val-tRNA(Ile). In Colwellia psychrerythraea (strain 34H / ATCC BAA-681) (Vibrio psychroerythus), this protein is Isoleucine--tRNA ligase.